Consider the following 148-residue polypeptide: Large ribosomal subunit protein bL9 (148 aa).

It belongs to the bacterial ribosomal protein bL9 family.

Its function is as follows. Binds to the 23S rRNA. In Bacillus mycoides (strain KBAB4) (Bacillus weihenstephanensis), this protein is Large ribosomal subunit protein bL9.